The sequence spans 354 residues: Biotin synthase (354 aa).

In terms of domain architecture, Radical SAM core spans 40 to 258; sequence NEVQVSTLLS…IAVARILMPR (219 aa). Cysteine 55, cysteine 59, and cysteine 62 together coordinate [4Fe-4S] cluster. [2Fe-2S] cluster is bound by residues cysteine 99, cysteine 130, cysteine 190, and arginine 262.

The protein belongs to the radical SAM superfamily. Biotin synthase family. As to quaternary structure, homodimer. [4Fe-4S] cluster serves as cofactor. [2Fe-2S] cluster is required as a cofactor.

It catalyses the reaction (4R,5S)-dethiobiotin + (sulfur carrier)-SH + 2 reduced [2Fe-2S]-[ferredoxin] + 2 S-adenosyl-L-methionine = (sulfur carrier)-H + biotin + 2 5'-deoxyadenosine + 2 L-methionine + 2 oxidized [2Fe-2S]-[ferredoxin]. Its pathway is cofactor biosynthesis; biotin biosynthesis; biotin from 7,8-diaminononanoate: step 2/2. Functionally, catalyzes the conversion of dethiobiotin (DTB) to biotin by the insertion of a sulfur atom into dethiobiotin via a radical-based mechanism. In Hahella chejuensis (strain KCTC 2396), this protein is Biotin synthase.